The sequence spans 482 residues: Putative L-cysteine desulfhydrase 1 (482 aa).

Residues 1 to 10 show a composition bias toward acidic residues; the sequence is MASIPPDDDA. Residues 1–45 form a disordered region; the sequence is MASIPPDDDAAAAAAAGAAENGYGNGKGNGNGPAPRPPPAKRPRS. A compositionally biased stretch (low complexity) spans 11–22; it reads AAAAAAGAAENG. Lys276 is subject to N6-(pyridoxal phosphate)lysine.

Belongs to the class-V pyridoxal-phosphate-dependent aminotransferase family. Requires pyridoxal 5'-phosphate as cofactor.

It catalyses the reaction L-cysteine + H2O = hydrogen sulfide + pyruvate + NH4(+) + H(+). Functionally, catalyzes the production of hydrogen sulfide (H2S) from cysteine. The chain is Putative L-cysteine desulfhydrase 1 from Oryza sativa subsp. japonica (Rice).